Here is a 1155-residue protein sequence, read N- to C-terminus: Cilia- and flagella-associated protein 251 (1155 aa).

Composition is skewed to basic and acidic residues over residues 1–19 (MSDA…GETE) and 31–59 (KEVE…KTGE). 2 disordered regions span residues 1–144 (MSDA…KLSL) and 167–225 (LDQI…DIQS). Residues 60-69 (EEGEEEEEKE) are compositionally biased toward acidic residues. A compositionally biased stretch (basic and acidic residues) spans 70–95 (EEGKKDKKIVMEETEEKAGESQEKEA). The segment covering 99 to 111 (QEETTVEPQEVTE) has biased composition (low complexity). Polar residues-rich tracts occupy residues 118 to 128 (TQITDSQSVTS) and 172 to 182 (PEEQQISSPER). The span at 201–220 (GQERRDLEPENREEGQERTV) shows a compositional bias: basic and acidic residues. 14 WD repeats span residues 341–383 (PVHT…IWKW), 391–431 (ACTL…AWYE), 442–481 (LLTE…VWDI), 499–534 (PCKL…FYDH), 537–597 (SIVN…VYHL), 601–641 (GTKL…VWNY), 647–684 (LFSR…ILDA), 694–730 (PFKY…MLVV), 737–780 (WEYL…GYDL), 791–831 (LDIH…LFNA), 837–883 (RKTL…ILPV), 889–927 (KTSA…QWKI), 965–1005 (YFYY…FYPS), and 1025–1065 (GKLI…GYTN).

The protein resides in the cytoplasm. Its subcellular location is the cytoskeleton. The protein localises to the cilium axoneme. It localises to the cell projection. It is found in the cilium. The protein resides in the flagellum. Functionally, involved in spermatozoa motility. May also regulate cilium motility through its role in the assembly of the axonemal radial spokes. This is Cilia- and flagella-associated protein 251 from Pongo abelii (Sumatran orangutan).